The sequence spans 165 residues: 2-C-methyl-D-erythritol 2,4-cyclodiphosphate synthase (165 aa).

A divalent metal cation contacts are provided by D8 and H10. Residues 8-10 (DVH) and 34-35 (HS) each bind 4-CDP-2-C-methyl-D-erythritol 2-phosphate. H42 contributes to the a divalent metal cation binding site. Residues 56–58 (DIG), 61–65 (FPDTD), 132–135 (TTTE), F139, and R142 contribute to the 4-CDP-2-C-methyl-D-erythritol 2-phosphate site.

It belongs to the IspF family. In terms of assembly, homotrimer. It depends on a divalent metal cation as a cofactor.

It catalyses the reaction 4-CDP-2-C-methyl-D-erythritol 2-phosphate = 2-C-methyl-D-erythritol 2,4-cyclic diphosphate + CMP. It participates in isoprenoid biosynthesis; isopentenyl diphosphate biosynthesis via DXP pathway; isopentenyl diphosphate from 1-deoxy-D-xylulose 5-phosphate: step 4/6. Involved in the biosynthesis of isopentenyl diphosphate (IPP) and dimethylallyl diphosphate (DMAPP), two major building blocks of isoprenoid compounds. Catalyzes the conversion of 4-diphosphocytidyl-2-C-methyl-D-erythritol 2-phosphate (CDP-ME2P) to 2-C-methyl-D-erythritol 2,4-cyclodiphosphate (ME-CPP) with a corresponding release of cytidine 5-monophosphate (CMP). The chain is 2-C-methyl-D-erythritol 2,4-cyclodiphosphate synthase from Halothermothrix orenii (strain H 168 / OCM 544 / DSM 9562).